The chain runs to 580 residues: Aspartate--tRNA ligase (580 aa).

Glutamate 173 is a binding site for L-aspartate. Residues 195-198 (QIYK) form an aspartate region. Arginine 217 is an L-aspartate binding site. ATP is bound by residues 217–219 (RDE) and glutamine 226. An L-aspartate-binding site is contributed by histidine 443. Position 477 (glutamate 477) interacts with ATP. Arginine 484 contacts L-aspartate. Residue 529–532 (GIER) coordinates ATP.

It belongs to the class-II aminoacyl-tRNA synthetase family. Type 1 subfamily. Homodimer.

Its subcellular location is the cytoplasm. It carries out the reaction tRNA(Asp) + L-aspartate + ATP = L-aspartyl-tRNA(Asp) + AMP + diphosphate. Functionally, catalyzes the attachment of L-aspartate to tRNA(Asp) in a two-step reaction: L-aspartate is first activated by ATP to form Asp-AMP and then transferred to the acceptor end of tRNA(Asp). The protein is Aspartate--tRNA ligase of Malacoplasma penetrans (strain HF-2) (Mycoplasma penetrans).